Reading from the N-terminus, the 204-residue chain is Probable peptidyl-tRNA hydrolase (204 aa).

Residue His-36 is the Proton acceptor of the active site. Positions 86 and 132 each coordinate tRNA.

It belongs to the PTH family.

The enzyme catalyses an N-acyl-L-alpha-aminoacyl-tRNA + H2O = an N-acyl-L-amino acid + a tRNA + H(+). Its function is as follows. Peptidyl-tRNA hydrolase that cleaves nascent chains-tRNAs that are not stably fixed in the P-site of 60S ribosome-nascent chain complexes. Acts downstream of the ribosome-associated quality control (RQC) pathway to release non-ubiquitinated nascent chains from 60S and 80S ribosome-nascent chain complexes. Does not act on ubiquitinated nascent chains, which are cleaved by ANKZF1 for degradation. This Mus musculus (Mouse) protein is Probable peptidyl-tRNA hydrolase.